We begin with the raw amino-acid sequence, 404 residues long: Corticosteroid-binding globulin (404 aa).

The first 30 residues, 1-30 (MAWSTRTMMSLALYTCFLWLLTSGLKTVQS), serve as a signal peptide directing secretion. Residues Asn95 and Asn225 are each glycosylated (N-linked (GlcNAc...) asparagine). Gln253 lines the cortisol pocket. Asn259 carries an N-linked (GlcNAc...) asparagine glycan. Glu285 contacts cortisol. An N-linked (GlcNAc...) asparagine glycan is attached at Asn326. A cortisol-binding site is contributed by Trp392.

It belongs to the serpin family. As to expression, expressed by the liver; secreted in plasma.

It is found in the secreted. Its function is as follows. Major transport protein for glucocorticoids and progestins in the blood of almost all vertebrate species. The protein is Corticosteroid-binding globulin (SERPINA6) of Mesocricetus auratus (Golden hamster).